The primary structure comprises 234 residues: Phosphoribosylformylglycinamidine synthase subunit PurQ (234 aa).

One can recognise a Glutamine amidotransferase type-1 domain in the interval 6-234 (VGVVVFPGSN…ESLFRSLTGV (229 aa)). Cysteine 89 (nucleophile) is an active-site residue. Catalysis depends on residues histidine 206 and glutamate 208.

Part of the FGAM synthase complex composed of 1 PurL, 1 PurQ and 2 PurS subunits.

The protein resides in the cytoplasm. The enzyme catalyses N(2)-formyl-N(1)-(5-phospho-beta-D-ribosyl)glycinamide + L-glutamine + ATP + H2O = 2-formamido-N(1)-(5-O-phospho-beta-D-ribosyl)acetamidine + L-glutamate + ADP + phosphate + H(+). It carries out the reaction L-glutamine + H2O = L-glutamate + NH4(+). Its pathway is purine metabolism; IMP biosynthesis via de novo pathway; 5-amino-1-(5-phospho-D-ribosyl)imidazole from N(2)-formyl-N(1)-(5-phospho-D-ribosyl)glycinamide: step 1/2. In terms of biological role, part of the phosphoribosylformylglycinamidine synthase complex involved in the purines biosynthetic pathway. Catalyzes the ATP-dependent conversion of formylglycinamide ribonucleotide (FGAR) and glutamine to yield formylglycinamidine ribonucleotide (FGAM) and glutamate. The FGAM synthase complex is composed of three subunits. PurQ produces an ammonia molecule by converting glutamine to glutamate. PurL transfers the ammonia molecule to FGAR to form FGAM in an ATP-dependent manner. PurS interacts with PurQ and PurL and is thought to assist in the transfer of the ammonia molecule from PurQ to PurL. This chain is Phosphoribosylformylglycinamidine synthase subunit PurQ, found in Chlorobium chlorochromatii (strain CaD3).